The following is a 238-amino-acid chain: Ribonuclease PH (238 aa).

Residues arginine 86 and 124 to 126 (GTR) each bind phosphate.

The protein belongs to the RNase PH family. As to quaternary structure, homohexameric ring arranged as a trimer of dimers.

The catalysed reaction is tRNA(n+1) + phosphate = tRNA(n) + a ribonucleoside 5'-diphosphate. Phosphorolytic 3'-5' exoribonuclease that plays an important role in tRNA 3'-end maturation. Removes nucleotide residues following the 3'-CCA terminus of tRNAs; can also add nucleotides to the ends of RNA molecules by using nucleoside diphosphates as substrates, but this may not be physiologically important. Probably plays a role in initiation of 16S rRNA degradation (leading to ribosome degradation) during starvation. This chain is Ribonuclease PH, found in Salmonella agona (strain SL483).